An 832-amino-acid chain; its full sequence is Cadherin-like protein 26 (832 aa).

An N-terminal signal peptide occupies residues 1–27 (MAMRSGRHPSLLLLLVLLLWLLQVSII). Residues 28-614 (DSVQQETDDL…ELADAEVGLH (587 aa)) lie on the Extracellular side of the membrane. 4 consecutive Cadherin domains span residues 35–165 (DDLT…APQF), 166–275 (PEKE…RPAF), 276–396 (TQEN…PPAF), and 397–500 (HPQS…VPTL). N-linked (GlcNAc...) asparagine glycans are attached at residues Asn-81, Asn-85, Asn-171, and Asn-177. The N-linked (GlcNAc...) asparagine glycan is linked to Asn-462. The chain crosses the membrane as a helical span at residues 615–635 (VGALFPVCAAFVALAVALLFL). Residues 636-832 (LRCYFVLEPK…EIYSESGVPS (197 aa)) lie on the Cytoplasmic side of the membrane. The segment at 813–832 (SLGSKATPFEEIYSESGVPS) is disordered.

Homodimer. Component of a cadherin:catenin adhesion complex composed of at least of CDH26, beta-catenin/CTNNB1, alpha-catenin/CTNNA1 and p120 catenin/CTNND1. N-glycosylated. As to expression, expressed by epithelial cells of gastrointestinal tissue.

It localises to the cell membrane. Cadherins are calcium-dependent cell adhesion proteins. They preferentially interact with themselves in a homophilic manner in connecting cells; cadherins may thus contribute to the sorting of heterogeneous cell types. Ligand for integrins alpha-E/beta-7, ITGAE:ITGAB7, alpha-4/beta-7, ITGA4:ITGAB7 and alpha-4/beta-1, ITGA4:ITGAB1 through which modulates CD4(+) T cells activation. The chain is Cadherin-like protein 26 (CDH26) from Homo sapiens (Human).